A 401-amino-acid polypeptide reads, in one-letter code: Phosphoglycerate kinase (401 aa).

Residues 21–23, Arg-36, 59–62, Arg-119, and Arg-160 each bind substrate; these read DFN and HLGR. Residues Lys-212, Glu-330, and 357 to 360 each bind ATP; that span reads GGDS.

It belongs to the phosphoglycerate kinase family. In terms of assembly, monomer.

The protein resides in the cytoplasm. It carries out the reaction (2R)-3-phosphoglycerate + ATP = (2R)-3-phospho-glyceroyl phosphate + ADP. The protein operates within carbohydrate degradation; glycolysis; pyruvate from D-glyceraldehyde 3-phosphate: step 2/5. The protein is Phosphoglycerate kinase of Limosilactobacillus reuteri subsp. reuteri (strain JCM 1112) (Lactobacillus reuteri).